Here is a 306-residue protein sequence, read N- to C-terminus: ClpXP adapter protein SpxH (306 aa).

Belongs to the SpxH family. As to quaternary structure, interacts with Spx.

It is found in the cytoplasm. Functionally, adapter protein required for efficient degradation of Spx by ClpXP under non-stress conditions. Interaction with Spx stabilizes Spx and exposes the C-terminus of Spx for recognition and proteolysis by ClpXP. The chain is ClpXP adapter protein SpxH from Halalkalibacterium halodurans (strain ATCC BAA-125 / DSM 18197 / FERM 7344 / JCM 9153 / C-125) (Bacillus halodurans).